We begin with the raw amino-acid sequence, 122 residues long: Histone H2B 1 (122 aa).

The segment at 1–30 (MPPKPSAKGAKKAAKTVTKPKDGKKRRHAR) is disordered. O-linked (GlcNAc) serine glycosylation is present at Ser109. A Glycyl lysine isopeptide (Lys-Gly) (interchain with G-Cter in ubiquitin) cross-link involves residue Lys117.

It belongs to the histone H2B family. The nucleosome is a histone octamer containing two molecules each of H2A, H2B, H3 and H4 assembled in one H3-H4 heterotetramer and two H2A-H2B heterodimers. The octamer wraps approximately 147 bp of DNA. In terms of processing, monoubiquitination of Lys-117 gives a specific tag for epigenetic transcriptional activation and is also prerequisite for histone H3 'Lys-4' and 'Lys-79' methylation. GlcNAcylation at Ser-109 promotes monoubiquitination of Lys-117. It fluctuates in response to extracellular glucose, and associates with transcribed genes.

Its subcellular location is the nucleus. It localises to the chromosome. Core component of nucleosome. Nucleosomes wrap and compact DNA into chromatin, limiting DNA accessibility to the cellular machineries which require DNA as a template. Histones thereby play a central role in transcription regulation, DNA repair, DNA replication and chromosomal stability. DNA accessibility is regulated via a complex set of post-translational modifications of histones, also called histone code, and nucleosome remodeling. This chain is Histone H2B 1 (his-11), found in Caenorhabditis elegans.